Here is a 588-residue protein sequence, read N- to C-terminus: 2-(3-amino-3-carboxypropyl)histidine synthase subunit 2 (588 aa).

3 residues coordinate [4Fe-4S] cluster: Cys-149, Cys-170, and Cys-402. Disordered regions lie at residues 454–485 (DERNKQEINDGSDNNEEDSDDEAPEFNPVTGQ) and 546–588 (GLGS…TKFQ). A compositionally biased stretch (acidic residues) spans 466–477 (DNNEEDSDDEAP). Over residues 579-588 (YDYDRETKFQ) the composition is skewed to basic and acidic residues.

The protein belongs to the DPH1/DPH2 family. DPH2 subfamily. As to quaternary structure, component of the 2-(3-amino-3-carboxypropyl)histidine synthase complex composed of DPH1, DPH2, DPH3 and a NADH-dependent reductase, predominantly CBR1. It depends on [4Fe-4S] cluster as a cofactor.

It localises to the cytoplasm. It functions in the pathway protein modification; peptidyl-diphthamide biosynthesis. Its function is as follows. Required for the first step of diphthamide biosynthesis, a post-translational modification of histidine which occurs in elongation factor 2. DPH1 and DPH2 transfer a 3-amino-3-carboxypropyl (ACP) group from S-adenosyl-L-methionine (SAM) to a histidine residue, the reaction is assisted by a reduction system comprising DPH3 and a NADH-dependent reductase, predominantly CBR1. Facilitates the reduction of the catalytic iron-sulfur cluster found in the DPH1 subunit. The chain is 2-(3-amino-3-carboxypropyl)histidine synthase subunit 2 (DPH2) from Debaryomyces hansenii (strain ATCC 36239 / CBS 767 / BCRC 21394 / JCM 1990 / NBRC 0083 / IGC 2968) (Yeast).